The following is a 670-amino-acid chain: Small ribosomal subunit protein mS39 (670 aa).

A mitochondrion-targeting transit peptide spans 1 to 13; that stretch reads MAAPCVRLGSVRC. 11 PPR repeats span residues 129–163, 164–199, 209–239, 240–274, 275–314, 315–351, 352–392, 396–430, 438–472, 473–507, and 556–590; these read VEGV…GTAP, SLET…EVQD, RPRQ…MPER, NAHS…RLTA, DVQT…NVRP, NLLT…NIEP, SLAT…FTLR, DVYF…DNRG, QSTY…LYYP, NSRG…GHSN, and SAGS…HRVP. Positions 187–213 are disordered; the sequence is IQTSEQEQQEVQDQQETEDPKKRPRQY. Residues 193-203 are compositionally biased toward acidic residues; sequence EQQEVQDQQET. Residues 648 to 670 are disordered; sequence EDLQKSHSSSSSSSSSSSDSDRE. Over residues 653–670 the composition is skewed to low complexity; that stretch reads SHSSSSSSSSSSSDSDRE.

This sequence belongs to the mitochondrion-specific ribosomal protein mS39 family.

The protein resides in the mitochondrion. Functionally, mitochondrial protein that may have a role in mitochondrial translation. The polypeptide is Small ribosomal subunit protein mS39 (ptcd3) (Xenopus tropicalis (Western clawed frog)).